Consider the following 459-residue polypeptide: ATP synthase subunit beta (459 aa).

ATP is bound at residue 148–155 (GGAGVGKT).

Belongs to the ATPase alpha/beta chains family. F-type ATPases have 2 components, CF(1) - the catalytic core - and CF(0) - the membrane proton channel. CF(1) has five subunits: alpha(3), beta(3), gamma(1), delta(1), epsilon(1). CF(0) has three main subunits: a(1), b(2) and c(9-12). The alpha and beta chains form an alternating ring which encloses part of the gamma chain. CF(1) is attached to CF(0) by a central stalk formed by the gamma and epsilon chains, while a peripheral stalk is formed by the delta and b chains.

Its subcellular location is the cell inner membrane. The enzyme catalyses ATP + H2O + 4 H(+)(in) = ADP + phosphate + 5 H(+)(out). In terms of biological role, produces ATP from ADP in the presence of a proton gradient across the membrane. The catalytic sites are hosted primarily by the beta subunits. The polypeptide is ATP synthase subunit beta (Thioalkalivibrio sulfidiphilus (strain HL-EbGR7)).